A 263-amino-acid polypeptide reads, in one-letter code: tRNA pseudouridine synthase A (263 aa).

Aspartate 51 functions as the Nucleophile in the catalytic mechanism. Position 109 (tyrosine 109) interacts with substrate.

It belongs to the tRNA pseudouridine synthase TruA family. Homodimer.

It carries out the reaction uridine(38/39/40) in tRNA = pseudouridine(38/39/40) in tRNA. Its function is as follows. Formation of pseudouridine at positions 38, 39 and 40 in the anticodon stem and loop of transfer RNAs. In Mannheimia succiniciproducens (strain KCTC 0769BP / MBEL55E), this protein is tRNA pseudouridine synthase A.